The sequence spans 214 residues: MRVKHKPWAKDRLEEFPAIYIKNPEDFKGQWQEVFGNNNPIHIEIGSGKGQFISGMAKANPEINYIGIEMIESVLVSALDKAIEADVPNLRLVARDAKLLEECFEKGEVAQIYLNFSDPWPKKRHTKRRLTNPTFLTIYERLLPKAGEIHFKTDNRSLFEYSLVAFSEYNMLLTFVSLDLHNSDYEGNIKTEYEEKFSAKGFPIYRLEAKFDRN.

Residues Glu44, Glu69, Asp96, and Asp118 each contribute to the S-adenosyl-L-methionine site. Asp118 is an active-site residue. Substrate is bound by residues Lys122, Asp154, and Thr191 to Glu194.

It belongs to the class I-like SAM-binding methyltransferase superfamily. TrmB family.

It catalyses the reaction guanosine(46) in tRNA + S-adenosyl-L-methionine = N(7)-methylguanosine(46) in tRNA + S-adenosyl-L-homocysteine. The protein operates within tRNA modification; N(7)-methylguanine-tRNA biosynthesis. Catalyzes the formation of N(7)-methylguanine at position 46 (m7G46) in tRNA. The protein is tRNA (guanine-N(7)-)-methyltransferase of Listeria monocytogenes serotype 4a (strain HCC23).